A 722-amino-acid chain; its full sequence is Glycine--tRNA ligase beta subunit (722 aa).

The protein belongs to the class-II aminoacyl-tRNA synthetase family. As to quaternary structure, tetramer of two alpha and two beta subunits.

The protein resides in the cytoplasm. It catalyses the reaction tRNA(Gly) + glycine + ATP = glycyl-tRNA(Gly) + AMP + diphosphate. The protein is Glycine--tRNA ligase beta subunit of Xylella fastidiosa (strain Temecula1 / ATCC 700964).